The sequence spans 945 residues: Probable inorganic carbon transporter subunit DabA (945 aa).

4 residues coordinate Zn(2+): Cys408, Asp410, His651, and Cys666.

Belongs to the inorganic carbon transporter (TC 9.A.2) DabA family. In terms of assembly, forms a complex with DabB. The cofactor is Zn(2+).

The protein resides in the cell inner membrane. Its function is as follows. Part of an energy-coupled inorganic carbon pump. The polypeptide is Probable inorganic carbon transporter subunit DabA (Sulfurihydrogenibium azorense (strain DSM 15241 / OCM 825 / Az-Fu1)).